The sequence spans 72 residues: uncharacterized protein (72 aa).

Topologically, residues 1 to 12 (MSKHKHEWTESV) are cytoplasmic. The chain crosses the membrane as a helical span at residues 13-32 (ANSGPASILSYCASSILMTV). At 33 to 46 (TNKFVVNLDNFNMN) the chain is on the lumenal side. A helical membrane pass occupies residues 47–69 (FVMLFVQSLVCTVTLCILRIVGV). Topologically, residues 70–72 (ANF) are cytoplasmic.

It belongs to the TPT transporter family. SLC35D subfamily.

The protein resides in the membrane. This is an uncharacterized protein from Saccharomyces cerevisiae (strain RM11-1a) (Baker's yeast).